The sequence spans 301 residues: Protein FdhE homolog (301 aa).

The protein belongs to the FdhE family.

It is found in the cytoplasm. In terms of biological role, necessary for formate dehydrogenase activity. This Shewanella baltica (strain OS195) protein is Protein FdhE homolog.